An 89-amino-acid chain; its full sequence is MRSLTLAAVLACSLLLVFHTSAAEEHEAQEGYLMNPGDTDTALATVDDERILECVFSCDIEKEGKPCKPKGEKKCTGGWKCKIKLCLKI.

The signal sequence occupies residues 1–23 (MRSLTLAAVLACSLLLVFHTSAA). Residues 24–50 (EEHEAQEGYLMNPGDTDTALATVDDER) constitute a propeptide that is removed on maturation. 3 disulfide bridges follow: Cys54/Cys75, Cys58/Cys81, and Cys67/Cys86.

Belongs to the neurotoxin 12 (Hwtx-2) family. 06 (TXP1) subfamily. In terms of tissue distribution, expressed by the venom gland.

It is found in the secreted. Its function is as follows. Inhibits voltage-gated calcium channels (Cav) in rat cerebellar granule cells. Has insecticidal activity. This chain is Omega-theraphotoxin-Ba1c, found in Brachypelma albiceps (Mexican golden redrump tarantula).